Consider the following 277-residue polypeptide: Diaminopimelate epimerase (277 aa).

Residues Asn-11 and Asn-72 each contribute to the substrate site. Cys-81 functions as the Proton donor in the catalytic mechanism. Residues 82-83, Asn-189, and 207-208 contribute to the substrate site; these read GN and ER. Cys-217 functions as the Proton acceptor in the catalytic mechanism. Position 218 to 219 (218 to 219) interacts with substrate; that stretch reads GT.

It belongs to the diaminopimelate epimerase family. Homodimer.

The protein resides in the cytoplasm. It catalyses the reaction (2S,6S)-2,6-diaminopimelate = meso-2,6-diaminopimelate. Its pathway is amino-acid biosynthesis; L-lysine biosynthesis via DAP pathway; DL-2,6-diaminopimelate from LL-2,6-diaminopimelate: step 1/1. Functionally, catalyzes the stereoinversion of LL-2,6-diaminopimelate (L,L-DAP) to meso-diaminopimelate (meso-DAP), a precursor of L-lysine and an essential component of the bacterial peptidoglycan. This is Diaminopimelate epimerase from Hydrogenobaculum sp. (strain Y04AAS1).